Consider the following 509-residue polypeptide: Maturase K (509 aa).

This sequence belongs to the intron maturase 2 family. MatK subfamily.

The protein localises to the plastid. It localises to the chloroplast. Functionally, usually encoded in the trnK tRNA gene intron. Probably assists in splicing its own and other chloroplast group II introns. This Portulaca oleracea (Common purslane) protein is Maturase K.